The primary structure comprises 267 residues: Indole-3-glycerol phosphate synthase (267 aa).

The protein belongs to the TrpC family.

It carries out the reaction 1-(2-carboxyphenylamino)-1-deoxy-D-ribulose 5-phosphate + H(+) = (1S,2R)-1-C-(indol-3-yl)glycerol 3-phosphate + CO2 + H2O. It participates in amino-acid biosynthesis; L-tryptophan biosynthesis; L-tryptophan from chorismate: step 4/5. The protein is Indole-3-glycerol phosphate synthase of Cupriavidus pinatubonensis (strain JMP 134 / LMG 1197) (Cupriavidus necator (strain JMP 134)).